The sequence spans 1063 residues: Alkane uptake protein B (1063 aa).

An N-terminal signal peptide occupies residues 1–17 (MKYNKTLALIPAILLAA). Cys18 is lipidated: N-palmitoyl cysteine. Cys18 carries S-diacylglycerol cysteine lipidation.

As to quaternary structure, interacts with the outer membrane protein AupA.

It is found in the cell inner membrane. Functionally, required for growth on alkanes. Probably involved in the uptake of micelle-solubilized alkanes. May facilitate the transfer of alkanes from the outer membrane to the inner membrane. The chain is Alkane uptake protein B from Marinobacter nauticus (strain ATCC 49840 / DSM 8798 / CIP 103578 / SP17) (Marinobacter hydrocarbonoclasticus).